The following is a 147-amino-acid chain: Flagellar assembly factor FliW (147 aa).

Belongs to the FliW family. Interacts with translational regulator CsrA and flagellin(s).

The protein localises to the cytoplasm. Its function is as follows. Acts as an anti-CsrA protein, binds CsrA and prevents it from repressing translation of its target genes, one of which is flagellin. Binds to flagellin and participates in the assembly of the flagellum. The chain is Flagellar assembly factor FliW from Oceanobacillus iheyensis (strain DSM 14371 / CIP 107618 / JCM 11309 / KCTC 3954 / HTE831).